The primary structure comprises 152 residues: Anaerobic nitrite reductase SYMA (152 aa).

The Globin domain maps to 2–151 (ALTERQEALL…LVATIKAEMK (150 aa)). Positions 35–39 (EAAPE) match the Homodimerization motif. Heme b contacts are provided by Ser-45, Lys-59, His-63, Arg-93, and His-98. The Homodimerization motif lies at 105 to 117 (DPHFEVMKGALLG).

Belongs to the plant globin family. In terms of assembly, homodimer. Requires heme b as cofactor. In terms of tissue distribution, root nodules.

Its subcellular location is the cytoplasm. It localises to the nucleus. The enzyme catalyses Fe(III)-heme b-[protein] + nitric oxide + H2O = Fe(II)-heme b-[protein] + nitrite + 2 H(+). In terms of biological role, phytoglobin that reduces nitrite to nitric oxide (NO) under anoxic conditions (e.g. during flooding or in waterlogged soil) and upon root nodulation. Required for general plant development and during nodulation, especially for the onset of symbiosis. Monitors nitric oxide (NO) levels during early phase of the nitrogen-fixing symbiosis and buffers oxygen in functioning nodules. May not function as an oxygen storage or transport protein. Has an unusually high affinity for O(2) through a hexacoordinate heme iron because of a very low dissociation constant. This is Anaerobic nitrite reductase SYMA from Casuarina glauca (Swamp oak).